We begin with the raw amino-acid sequence, 508 residues long: Photosystem II CP47 reaction center protein (508 aa).

Helical transmembrane passes span 21–36, 101–115, 140–156, 203–218, 237–252, and 457–472; these read SVHIMHTALVSGWAGS, IVFSGLCFLAAIWHW, GIHLFLSGVACFGFGAF, IAAGTLGILAGLFHLS, VLSSSIAAVFFAAFVV, and TFALLFFFGHIWHGAR.

It belongs to the PsbB/PsbC family. PsbB subfamily. As to quaternary structure, PSII is composed of 1 copy each of membrane proteins PsbA, PsbB, PsbC, PsbD, PsbE, PsbF, PsbH, PsbI, PsbJ, PsbK, PsbL, PsbM, PsbT, PsbX, PsbY, PsbZ, Psb30/Ycf12, at least 3 peripheral proteins of the oxygen-evolving complex and a large number of cofactors. It forms dimeric complexes. The cofactor is Binds multiple chlorophylls. PSII binds additional chlorophylls, carotenoids and specific lipids..

The protein localises to the plastid. The protein resides in the chloroplast thylakoid membrane. Functionally, one of the components of the core complex of photosystem II (PSII). It binds chlorophyll and helps catalyze the primary light-induced photochemical processes of PSII. PSII is a light-driven water:plastoquinone oxidoreductase, using light energy to abstract electrons from H(2)O, generating O(2) and a proton gradient subsequently used for ATP formation. This chain is Photosystem II CP47 reaction center protein, found in Chloranthus spicatus (Chulantree).